Reading from the N-terminus, the 346-residue chain is Ferredoxin--NADP reductase 1 (346 aa).

7 residues coordinate FAD: Glu-37, Lys-45, Tyr-49, Ile-89, Pro-124, Asp-287, and Ser-328.

This sequence belongs to the ferredoxin--NADP reductase type 2 family. Homodimer. FAD serves as cofactor.

The enzyme catalyses 2 reduced [2Fe-2S]-[ferredoxin] + NADP(+) + H(+) = 2 oxidized [2Fe-2S]-[ferredoxin] + NADPH. This is Ferredoxin--NADP reductase 1 from Bacillus pumilus (strain SAFR-032).